Consider the following 227-residue polypeptide: Lipoprotein-releasing system ATP-binding protein LolD (227 aa).

An ABC transporter domain is found at 6–227 (LKIEGLRKTY…HLEDGVLVER (222 aa)). 43 to 50 (APSGAGKS) provides a ligand contact to ATP.

The protein belongs to the ABC transporter superfamily. Lipoprotein translocase (TC 3.A.1.125) family. In terms of assembly, the complex is composed of two ATP-binding proteins (LolD) and two transmembrane proteins (LolC and LolE).

It is found in the cell inner membrane. Its function is as follows. Part of the ABC transporter complex LolCDE involved in the translocation of mature outer membrane-directed lipoproteins, from the inner membrane to the periplasmic chaperone, LolA. Responsible for the formation of the LolA-lipoprotein complex in an ATP-dependent manner. In Ruegeria sp. (strain TM1040) (Silicibacter sp.), this protein is Lipoprotein-releasing system ATP-binding protein LolD.